A 156-amino-acid polypeptide reads, in one-letter code: Endoribonuclease YbeY (156 aa).

Positions 111, 115, and 121 each coordinate Zn(2+).

This sequence belongs to the endoribonuclease YbeY family. It depends on Zn(2+) as a cofactor.

It localises to the cytoplasm. Single strand-specific metallo-endoribonuclease involved in late-stage 70S ribosome quality control and in maturation of the 3' terminus of the 16S rRNA. The chain is Endoribonuclease YbeY from Hahella chejuensis (strain KCTC 2396).